The primary structure comprises 677 residues: Methionine--tRNA ligase (677 aa).

Positions 15–25 (PYANGPIHIGH) match the 'HIGH' region motif. 4 residues coordinate Zn(2+): C146, C149, C159, and C162. Positions 332-336 (KMSKS) match the 'KMSKS' region motif. K335 is a binding site for ATP. The tRNA-binding domain occupies 576-677 (DFAKVDLRVA…DGAKPGMRIM (102 aa)).

Belongs to the class-I aminoacyl-tRNA synthetase family. MetG type 1 subfamily. In terms of assembly, homodimer. It depends on Zn(2+) as a cofactor.

The protein resides in the cytoplasm. The catalysed reaction is tRNA(Met) + L-methionine + ATP = L-methionyl-tRNA(Met) + AMP + diphosphate. Is required not only for elongation of protein synthesis but also for the initiation of all mRNA translation through initiator tRNA(fMet) aminoacylation. In Idiomarina loihiensis (strain ATCC BAA-735 / DSM 15497 / L2-TR), this protein is Methionine--tRNA ligase.